The sequence spans 126 residues: RuBisCO chaperone RbcX (126 aa).

This sequence belongs to the RbcX family. In terms of assembly, homodimer. Interacts with the exposed C-terminal peptide of RbcL via its central cleft, contacts a second RbcL monomer via its peripheral polar surface.

Its subcellular location is the carboxysome. It localises to the cytoplasm. In terms of biological role, an RbcL-specific chaperone. Required for assembly of the RbcL8 core. The central cleft of the RbcX homodimer (RbcX2) binds the C-terminus of a RbcL monomer, stabilizing the C-terminus and probably preventing its reassociation with chaperonin GroEL-ES. At the same time the peripheral region of RbcX2 binds a second RbcL monomer, bridging the RbcL homodimers in the correct orientation. The RbcX2(2)-bound RbcL dimers then assemble into the RbcL8 core (RbcL8-(RbcX2)8). RbcS binding triggers the release of RbcX2. The sequence is that of RuBisCO chaperone RbcX from Thermosynechococcus vestitus (strain NIES-2133 / IAM M-273 / BP-1).